The chain runs to 609 residues: Meiotically up-regulated gene 28 protein (609 aa).

RRM domains lie at 20-103 (ISIY…YTHI) and 419-499 (CNLF…YAEK).

It localises to the cytoplasm. Functionally, has a role in sporulation. In Schizosaccharomyces pombe (strain 972 / ATCC 24843) (Fission yeast), this protein is Meiotically up-regulated gene 28 protein (mug28).